The following is a 194-amino-acid chain: Holliday junction branch migration complex subunit RuvA (194 aa).

Positions 1-64 (MIGRLRGILA…EDSVSLYGFL (64 aa)) are domain I. Residues 65-140 (REGERRLFRD…RAADFSSGAP (76 aa)) form a domain II region. Residues 140 to 144 (PITGQ) are flexible linker. Residues 145-194 (LGPDAISEATVALQQLGYKPAEAARMARDAGAEGGEVATVIRKALQAALR) are domain III.

It belongs to the RuvA family. As to quaternary structure, homotetramer. Forms an RuvA(8)-RuvB(12)-Holliday junction (HJ) complex. HJ DNA is sandwiched between 2 RuvA tetramers; dsDNA enters through RuvA and exits via RuvB. An RuvB hexamer assembles on each DNA strand where it exits the tetramer. Each RuvB hexamer is contacted by two RuvA subunits (via domain III) on 2 adjacent RuvB subunits; this complex drives branch migration. In the full resolvosome a probable DNA-RuvA(4)-RuvB(12)-RuvC(2) complex forms which resolves the HJ.

The protein resides in the cytoplasm. Its function is as follows. The RuvA-RuvB-RuvC complex processes Holliday junction (HJ) DNA during genetic recombination and DNA repair, while the RuvA-RuvB complex plays an important role in the rescue of blocked DNA replication forks via replication fork reversal (RFR). RuvA specifically binds to HJ cruciform DNA, conferring on it an open structure. The RuvB hexamer acts as an ATP-dependent pump, pulling dsDNA into and through the RuvAB complex. HJ branch migration allows RuvC to scan DNA until it finds its consensus sequence, where it cleaves and resolves the cruciform DNA. The polypeptide is Holliday junction branch migration complex subunit RuvA (Xanthomonas oryzae pv. oryzae (strain MAFF 311018)).